Reading from the N-terminus, the 906-residue chain is Protein translocase subunit SecA (906 aa).

ATP contacts are provided by residues Gln-86, 104-108, and Asp-511; that span reads GEGKT. 2 stretches are compositionally biased toward basic and acidic residues: residues 853–865 and 877–888; these read HESV…RHDE and VRREGPKVKRND. Residues 853 to 906 form a disordered region; it reads HESVIDNNQRHDEDEQEEAPKVQQVRREGPKVKRNDPCPCGSGKKYKQCHGKVE. Zn(2+) is bound by residues Cys-890, Cys-892, Cys-901, and His-902. Basic residues predominate over residues 896-906; sequence KKYKQCHGKVE.

This sequence belongs to the SecA family. In terms of assembly, monomer and homodimer. Part of the essential Sec protein translocation apparatus which comprises SecA, SecYEG and auxiliary proteins SecDF-YajC and YidC. It depends on Zn(2+) as a cofactor.

The protein localises to the cell inner membrane. It localises to the cytoplasm. It carries out the reaction ATP + H2O + cellular proteinSide 1 = ADP + phosphate + cellular proteinSide 2.. Part of the Sec protein translocase complex. Interacts with the SecYEG preprotein conducting channel. Has a central role in coupling the hydrolysis of ATP to the transfer of proteins into and across the cell membrane, serving both as a receptor for the preprotein-SecB complex and as an ATP-driven molecular motor driving the stepwise translocation of polypeptide chains across the membrane. The sequence is that of Protein translocase subunit SecA from Francisella tularensis subsp. holarctica (strain FTNF002-00 / FTA).